We begin with the raw amino-acid sequence, 399 residues long: MAKEKFVKNKPHVNVGTIGHVDHGKTTLSAAISAVLATKGLAELKDYDNIDNAPEEKERGITIATSHIEYETENRHYAHVDCPGHADYVKNMITGAAQMDGAILVVSAADGPMPQTREHILLSRQVGVHYIVVFLNKQDMVDDAELLELVEMEVRELLSQYDFPGDDTPIIAGSALKALEEAKAGNVGEWGEKVLKLMEEVDKYIPTPQRDTEKTFLMPVEDVFSIAGRGTVVTGRVERGVVQVGDEVEIVGIRDTQKTTVTGVEMFRKELDKGEAGDNVGILLRGTKKEEVERGMVLCKPGSITPHKKFEGEIYVLSKDEGGRHTPFFNGYRPQFYVRTTDVTGSIELPSGVEMVMPGDNVKITVELIAPVALEDGTRFAIREGGRTVGSGVVTKIIE.

One can recognise a tr-type G domain in the interval 10 to 209 (KPHVNVGTIG…EVDKYIPTPQ (200 aa)). The interval 19–26 (GHVDHGKT) is G1. 19-26 (GHVDHGKT) provides a ligand contact to GTP. Residue threonine 26 participates in Mg(2+) binding. Residues 60–64 (GITIA) form a G2 region. The G3 stretch occupies residues 81–84 (DCPG). GTP is bound by residues 81–85 (DCPGH) and 136–139 (NKQD). The interval 136–139 (NKQD) is G4. Residues 174-176 (SAL) form a G5 region.

The protein belongs to the TRAFAC class translation factor GTPase superfamily. Classic translation factor GTPase family. EF-Tu/EF-1A subfamily. Monomer.

Its subcellular location is the cytoplasm. The enzyme catalyses GTP + H2O = GDP + phosphate + H(+). In terms of biological role, GTP hydrolase that promotes the GTP-dependent binding of aminoacyl-tRNA to the A-site of ribosomes during protein biosynthesis. This Helicobacter hepaticus (strain ATCC 51449 / 3B1) protein is Elongation factor Tu.